The primary structure comprises 409 residues: Homoserine O-succinyltransferase (409 aa).

One can recognise an AB hydrolase-1 domain in the interval 43-380; that stretch reads NAIVVCHALN…PHGHDAFLLD (338 aa). The active-site Nucleophile is the Ser-149. Residue Arg-219 participates in substrate binding. The tract at residues 244–268 is disordered; the sequence is TLPAARGSLPPEGTDPTRGGPASDR. Active-site residues include Asp-341 and His-374. Substrate is bound at residue Asp-375.

This sequence belongs to the AB hydrolase superfamily. MetX family. As to quaternary structure, homodimer.

Its subcellular location is the cytoplasm. It carries out the reaction L-homoserine + succinyl-CoA = O-succinyl-L-homoserine + CoA. It participates in amino-acid biosynthesis; L-methionine biosynthesis via de novo pathway; O-succinyl-L-homoserine from L-homoserine: step 1/1. In terms of biological role, transfers a succinyl group from succinyl-CoA to L-homoserine, forming succinyl-L-homoserine. This chain is Homoserine O-succinyltransferase, found in Comamonas testosteroni (strain DSM 14576 / KF-1) (Pseudomonas testosteroni).